Consider the following 141-residue polypeptide: Nucleoside diphosphate kinase (141 aa).

ATP contacts are provided by K11, F59, R87, T93, R104, and N114. Residue H117 is the Pros-phosphohistidine intermediate of the active site.

This sequence belongs to the NDK family. As to quaternary structure, homotetramer. It depends on Mg(2+) as a cofactor.

Its subcellular location is the cytoplasm. The enzyme catalyses a 2'-deoxyribonucleoside 5'-diphosphate + ATP = a 2'-deoxyribonucleoside 5'-triphosphate + ADP. It carries out the reaction a ribonucleoside 5'-diphosphate + ATP = a ribonucleoside 5'-triphosphate + ADP. Its function is as follows. Major role in the synthesis of nucleoside triphosphates other than ATP. The ATP gamma phosphate is transferred to the NDP beta phosphate via a ping-pong mechanism, using a phosphorylated active-site intermediate. The polypeptide is Nucleoside diphosphate kinase (Halorhodospira halophila (strain DSM 244 / SL1) (Ectothiorhodospira halophila (strain DSM 244 / SL1))).